The primary structure comprises 1956 residues: Sodium channel protein type 10 subunit alpha (1956 aa).

The Cytoplasmic segment spans residues 1–125; it reads MELPFASVGT…FNLIRRTAIK (125 aa). The interval 31–54 is disordered; that stretch reads HRAAKKARTKHRGQEDKGEKPRPQ. A compositionally biased stretch (basic residues) spans 32 to 41; it reads RAAKKARTKH. A compositionally biased stretch (basic and acidic residues) spans 42 to 54; it reads RGQEDKGEKPRPQ. One copy of the I repeat lies at 116–404; the sequence is FNLIRRTAIK…VTMAYEEQSQ (289 aa). The helical transmembrane segment at 126–149 threads the bilayer; that stretch reads VSVHSWFSIFITITILVNCVCMTR. Over 150–154 the chain is Extracellular; that stretch reads TDLPE. Residues 155–174 traverse the membrane as a helical segment; sequence KVEYVFTVIYTFEALIKILA. The Cytoplasmic portion of the chain corresponds to 175-187; the sequence is RGFCLNEFTYLRD. A helical transmembrane segment spans residues 188–206; that stretch reads PWNWLDFSVITLAYVGAAI. Residues 207 to 212 are Extracellular-facing; sequence DLRGIS. The chain crosses the membrane as a helical; Voltage-sensor span at residues 213–232; sequence GLRTFRVLRALKTVSVIPGL. Residues 233–248 lie on the Cytoplasmic side of the membrane; that stretch reads KVIVGALIHSVRKLAD. A helical transmembrane segment spans residues 249-272; it reads VTILTVFCLSVFALVGLQLFKGNL. Over 273–340 the chain is Extracellular; it reads KNKCIRNGTD…PDFNYTSFDS (68 aa). The cysteines at positions 276 and 318 are disulfide-linked. N279, N288, N311, and N334 each carry an N-linked (GlcNAc...) asparagine glycan. The pore-forming intramembrane region spans 341–365; that stretch reads FAWAFLSLFRLMTQDSWERLYQQTL. Residues 366–372 are Extracellular-facing; that stretch reads RASGKMY. A helical membrane pass occupies residues 373 to 398; the sequence is MVFFVLVIFLGSFYLVNLILAVVTMA. The Cytoplasmic portion of the chain corresponds to 399 to 658; that stretch reads YEEQSQATIA…KWRKFKMALF (260 aa). 4 positions are modified to phosphoserine: S440, S443, S466, and S478. The span at 441-453 shows a compositional bias: polar residues; that stretch reads LQSHSGSPLASKN. 2 disordered regions span residues 441–484 and 537–581; these read LQSH…YNQR and LLGR…AGAP. Polar residues predominate over residues 475–484; that stretch reads SPQSDPYNQR. A phosphoserine mark is found at S611 and S614. An II repeat occupies 646 to 910; the sequence is CCPKWRKFKM…EDDGEVNNLQ (265 aa). A helical membrane pass occupies residues 659–683; it reads ELVTDPFAELTITLCIVVNTVFMAM. At 684-694 the chain is on the extracellular side; the sequence is EHYPMTDAFDA. The helical transmembrane segment at 695-718 threads the bilayer; it reads MLQAGNIVFTVFFTMEMAFKIIAF. The Cytoplasmic portion of the chain corresponds to 719–726; the sequence is DPYYYFQK. The chain crosses the membrane as a helical span at residues 727-746; the sequence is KWNIFDCVIVTVSLLELSAS. The Extracellular segment spans residues 747–752; the sequence is KKGSLS. The chain crosses the membrane as a helical; Voltage-sensor span at residues 753–772; the sequence is VLRTFRLLRVFKLAKSWPTL. The Cytoplasmic portion of the chain corresponds to 773 to 788; it reads NTLIKIIGNSVGALGN. The chain crosses the membrane as a helical span at residues 789–809; sequence LTFILAIIVFIFALVGKQLLS. Residues 810–833 lie on the Extracellular side of the membrane; it reads EDYGCRKDGVSVWNGEKLRWHMCD. Residues 834 to 854 constitute an intramembrane region (pore-forming); that stretch reads FFHSFLVVFRILCGEWIENMW. The Extracellular segment spans residues 855-863; the sequence is VCMEVSQKS. A disulfide bridge links C856 with C865. The chain crosses the membrane as a helical span at residues 864–889; the sequence is ICLILFLTVMVLGNLVVLNLFIALLL. Residues 890–1148 lie on the Cytoplasmic side of the membrane; that stretch reads NSFSADNLTA…GWQVRKTCYR (259 aa). Residues 1008 to 1094 form a disordered region; it reads DELEEDMEQA…SEGSTVDCPD (87 aa). The III repeat unit spans residues 1141 to 1450; the sequence is QVRKTCYRIV…KKYYNAMKKL (310 aa). Residues 1149-1172 traverse the membrane as a helical segment; sequence IVEHSWFESFIIFMILLSSGALAF. The Extracellular portion of the chain corresponds to 1173–1185; it reads EDNYLEEKPRVKS. A helical transmembrane segment spans residues 1186-1211; the sequence is VLEYTDRVFTFIFVFEMLLKWVAYGF. Over 1212 to 1217 the chain is Cytoplasmic; it reads KKYFTN. A helical membrane pass occupies residues 1218–1239; that stretch reads AWCWLDFLIVNISLTSLIAKIL. Topologically, residues 1240–1243 are extracellular; it reads EYSD. A helical; Voltage-sensor membrane pass occupies residues 1244–1265; it reads VASIKALRTLRALRPLRALSRF. Topologically, residues 1266 to 1284 are cytoplasmic; that stretch reads EGMRVVVDALVGAIPSIMN. A helical membrane pass occupies residues 1285–1312; sequence VLLVCLIFWLIFSIMGVNLFAGKFSKCV. The Extracellular segment spans residues 1313–1354; it reads DTRNNPFSNVNSTMVNNKSECHNQNSTGHFFWVNVKVNFDNV. 3 N-linked (GlcNAc...) asparagine glycosylation sites follow: N1323, N1329, and N1337. The pore-forming intramembrane region spans 1355 to 1376; it reads AMGYLALLQVATFKGWMDIMYA. Residues 1377–1392 are Extracellular-facing; sequence AVDSGEINSQPNWENN. A helical transmembrane segment spans residues 1393-1419; that stretch reads LYMYLYFVVFIIFGGFFTLNLFVGVII. Residues 1420–1472 are Cytoplasmic-facing; that stretch reads DNFNQQKKKLGGQDIFMTEEQKKYYNAMKKLGSKKPQKPIPRPLNKYQGFVFD. S1452 bears the Phosphoserine; by PKC mark. The IV repeat unit spans residues 1459-1758; the sequence is IPRPLNKYQG…WEKFDPEATQ (300 aa). A helical transmembrane segment spans residues 1473-1496; it reads IVTRQAFDIIIMVLICLNMITMMV. The Extracellular segment spans residues 1497 to 1507; the sequence is ETDEQGEEKTK. A helical membrane pass occupies residues 1508 to 1531; sequence VLGRINQFFVAVFTGECVMKMFAL. At 1532–1537 the chain is on the cytoplasmic side; sequence RQYYFT. Residues 1538 to 1561 form a helical membrane-spanning segment; it reads NGWNVFDFIVVILSIGSLLFSAIL. Residues 1562–1573 lie on the Extracellular side of the membrane; that stretch reads KSLENYFSPTLF. Residues 1574–1595 form a helical; Voltage-sensor membrane-spanning segment; the sequence is RVIRLARIGRILRLIRAAKGIR. The Cytoplasmic segment spans residues 1596–1610; the sequence is TLLFALMMSLPALFN. A helical transmembrane segment spans residues 1611 to 1633; sequence IGLLLFLVMFIYSIFGMASFANV. At 1634–1647 the chain is on the extracellular side; it reads VDEAGIDDMFNFKT. The segment at residues 1648–1670 is an intramembrane region (pore-forming); the sequence is FGNSMLCLFQITTSAGWDGLLSP. The Extracellular segment spans residues 1671-1698; the sequence is ILNTGPPYCDPNLPNSNGSRGNCGSPAV. N-linked (GlcNAc...) asparagine glycosylation is present at N1687. A helical transmembrane segment spans residues 1699 to 1723; the sequence is GIIFFTTYIIISFLIVVNMYIAVIL. At 1724-1956 the chain is on the cytoplasmic side; sequence ENFNVATEES…AKEGNSPGPQ (233 aa). In terms of domain architecture, IQ spans 1852–1881; the sequence is EDLSATVIQKAYRSYMLHRSLTLSNTLHVP. Residues 1906 to 1956 are disordered; the sequence is DKSETASATSFPPSYDSVTRGLSDRANINPSSSMQNEDEVAAKEGNSPGPQ. The span at 1931 to 1940 shows a compositional bias: polar residues; it reads ANINPSSSMQ.

Belongs to the sodium channel (TC 1.A.1.10) family. Nav1.8/SCN10A subfamily. As to quaternary structure, the channel consists of an ion conducting pore forming alpha-subunit regulated by one or more associated auxiliary subunits SCN1B, SCN2B and SCN3B; electrophysiological properties may vary depending on the type of the associated beta subunits. Found in a number of complexes with PRX, DYNLT1 and PDZD2. Interacts with proteins such as FSTL1, PRX, DYNLT1, PDZD2, S100A10 and many others. Interacts with NEDD4 and NEDD4L. In terms of processing, ubiquitinated by NEDD4L; which promotes its endocytosis. Phosphorylation at Ser-1452 by PKC in a highly conserved cytoplasmic loop slows inactivation of the sodium channel and reduces peak sodium currents. Post-translationally, lacks the cysteine which covalently binds the conotoxin GVIIJ. This cysteine (position 815) is speculated in other sodium channel subunits alpha to be implied in covalent binding with the sodium channel subunit beta-2 or beta-4. In terms of tissue distribution, expressed in dorsal root ganglia, trigeminal ganglia, nodose ganglia and sciatic nerve.

It is found in the cell membrane. It carries out the reaction Na(+)(in) = Na(+)(out). Tetrodotoxin-resistant channel that mediates the voltage-dependent sodium ion permeability of excitable membranes. Assuming opened or closed conformations in response to the voltage difference across the membrane, the protein forms a sodium-selective channel through which sodium ions may pass in accordance with their electrochemical gradient. Plays a role in neuropathic pain mechanisms. The chain is Sodium channel protein type 10 subunit alpha from Rattus norvegicus (Rat).